The following is a 1538-amino-acid chain: Phenolphthiocerol/phthiocerol polyketide synthase subunit B (1538 aa).

A Ketosynthase family 3 (KS3) domain is found at 33-455 (AEPVAVVGIG…GTNAHVIIEQ (423 aa)). Catalysis depends on for beta-ketoacyl synthase activity residues Cys205, His340, and His377. The tract at residues 553–882 (DGSPGPGTVF…TNLYTADIAH (330 aa)) is acyltransferase. Residue Ser649 is the For malonyltransferase activity of the active site. 1153–1196 (SQLVIGATGNIGPHLIRQLARMGAKTIVAMARKPGALDELTQCL) lines the NADP(+) pocket. Positions 1153–1328 (SQLVIGATGN…TVVDWGLWKS (176 aa)) are beta-ketoacyl reductase. Residues 1423 to 1498 (DMLFDHVGAL…SLTDYLATVL (76 aa)) form the Carrier domain. Ser1458 is modified (O-(pantetheine 4'-phosphoryl)serine).

Requires NADP(+) as cofactor. Pantetheine 4'-phosphate is required as a cofactor.

It catalyses the reaction icosanoyl-[(phenol)carboxyphthiodiolenone synthase] + 2 (S)-methylmalonyl-CoA + 3 malonyl-CoA + 5 NADPH + 10 H(+) = C32-carboxyphthiodiolenone-[(phenol)carboxyphthiodiolenone synthase] + 5 CO2 + 5 NADP(+) + 5 CoA + 2 H2O. It carries out the reaction docosanoyl-[(phenol)carboxyphthiodiolenone synthase] + 2 (S)-methylmalonyl-CoA + 3 malonyl-CoA + 5 NADPH + 10 H(+) = C34-carboxyphthiodiolenone-[(phenol)carboxyphthiodiolenone synthase] + 5 CO2 + 5 NADP(+) + 5 CoA + 2 H2O. The enzyme catalyses 17-(4-hydroxyphenyl)heptadecanoyl-[(phenol)carboxyphthiodiolenone synthase] + 2 (S)-methylmalonyl-CoA + 3 malonyl-CoA + 5 NADPH + 10 H(+) = C35-(phenol)carboxyphthiodiolenone-[(phenol)carboxyphthiodiolenone synthase] + 5 CO2 + 5 NADP(+) + 5 CoA + 2 H2O. The catalysed reaction is 19-(4-hydroxyphenyl)nonadecanoyl-[(phenol)carboxyphthiodiolenone synthase] + 2 (S)-methylmalonyl-CoA + 3 malonyl-CoA + 5 NADPH + 10 H(+) = C37-(phenol)carboxyphthiodiolenone-[(phenol)carboxyphthiodiolenone synthase] + 5 CO2 + 5 NADP(+) + 5 CoA + 2 H2O. Its pathway is lipid metabolism; fatty acid biosynthesis. Its function is as follows. Part of the PpsABCDE complex involved in the biosynthesis of the lipid core common to phthiocerols and phenolphthiocerols by successive additions of malonyl-CoA or methylmalonyl-CoA extender units. PpsA can accept as substrate the activated forms of either icosanoyl (C20), docosanoyl (C22) or lignoceroyl (C24) groups from FadD26, or a (4-hydroxyphenyl)-C17 or (4-hydroxyphenyl)-C19 fatty acyl from FadD29. PpsA initiates the biosynthesis and extends its substrate using a malonyl-CoA extender unit. The PpsB and PpsC proteins add the second and third malonyl-CoA extender units. PpsD adds an (R)-methylmalonyl unit and PpsE adds a second (R)-methylmalonyl unit. The incorporation of the methylmalonyl units results in formation of two branched methyl groups in the elongated product. In Mycobacterium tuberculosis (strain CDC 1551 / Oshkosh), this protein is Phenolphthiocerol/phthiocerol polyketide synthase subunit B (ppsB).